A 103-amino-acid polypeptide reads, in one-letter code: Hexon-interlacing protein (103 aa).

Residues 72–99 (LDELKIQVAAMQNSVTAIQREVNDLKQR) adopt a coiled-coil conformation.

The protein belongs to the adenoviridae hexon-interlacing protein family. Homotrimer. Interacts with hexon protein; this interaction tethers the hexons together. Self-interacts with adjacent proteins. Interacts with kinesin light chain KLC1; this interaction leads to capsid disruption at the nuclear pore complex during virus entry into host cell.

The protein localises to the virion. It localises to the host nucleus. Structural component of the virion that acts as a cement protein on the capsid exterior and forms triskelion structures consisting of three molecules that stabilize three hexon trimers at the center of each icosahedral facet and fixes the peripentonal hexons. Dispensable for assembly. During virus entry, recruits the anterograde motor kinesin-1 to the capsid docked at the nuclear pore complex thereby subjecting the docked capsid to a pulling force. The resulting tension leads to capsid disruption, dispersion of capsid fragments toward cell periphery and eventually viral DNA entry into the host nucleus. The polypeptide is Hexon-interlacing protein (Canis lupus familiaris (Dog)).